The primary structure comprises 572 residues: Sorting nexin 2B (572 aa).

2 disordered regions span residues 1–97 and 114–136; these read MMGS…SSYL and SEINGSEDGHSQSSDSLSRSPSS. Positions 9 to 30 are enriched in basic and acidic residues; the sequence is ESHLHSSKEEMEKLFLREDGDP. Residues 32–53 are compositionally biased toward polar residues; the sequence is TKSNVNGDKSNSNYRSAMSTLF. Over residues 124-136 the composition is skewed to low complexity; sequence SQSSDSLSRSPSS. Ser-133 carries the post-translational modification Phosphoserine. The PX domain maps to 147–266; that stretch reads SNPQKEQEAT…KVFLQAQGKL (120 aa). The a 1,2-diacyl-sn-glycero-3-phospho-(1D-myo-inositol-3-phosphate) site is built by Arg-190, Lys-216, and Arg-233. One can recognise a BAR domain in the interval 318–572; the sequence is LRQSVSNDWG…ETRQYDRESS (255 aa).

Belongs to the sorting nexin family. In terms of assembly, homodimer. Heterodimer with SNX1 or SNX2B. Component of the retromer complex which consists of VPS29 (MAG1), VPS26 (VPS26A or VPS26B), VPS35 (VPS35A or VPS35B or VPS35C), VPS5/17 (SNX1 or SNX2A or SNX2B). In terms of tissue distribution, ubiquitously expressed.

The protein resides in the cytoplasm. It is found in the endosome membrane. It localises to the prevacuolar compartment membrane. The protein localises to the golgi apparatus. Its subcellular location is the trans-Golgi network membrane. In terms of biological role, plays a role in vesicular protein sorting. Acts at the crossroads between the secretory and endocytic pathways. Is involved in the endosome to vacuole protein transport and, as component of the membrane-associated retromer complex, is also involved in endosome-to-Golgi retrograde transport. The protein is Sorting nexin 2B (SNX2B) of Arabidopsis thaliana (Mouse-ear cress).